We begin with the raw amino-acid sequence, 254 residues long: uncharacterized protein (254 aa).

Belongs to the nucleoside-specific channel-forming outer membrane porin (Tsx) (TC 1.B.10) family.

This is an uncharacterized protein from Escherichia coli (strain K12).